We begin with the raw amino-acid sequence, 524 residues long: Cytochrome P450 4F11 (524 aa).

A helical transmembrane segment spans residues 15 to 37 (AASPWLLLLLVGGSWLLARVLAW). 4-hydroxynonenal-conjugated cysteine occurs at positions 45 and 260. H261 is modified (4-hydroxynonenal-conjugated histidine). A heme-binding site is contributed by E328. H347 carries the post-translational modification 4-hydroxynonenal-conjugated histidine. C354 bears the 4-hydroxynonenal-conjugated cysteine mark. 4-hydroxynonenal-conjugated lysine is present on K451. C468 contacts heme.

Belongs to the cytochrome P450 family. It depends on heme as a cofactor. 4-hydroxynonenal conjugation impairs substrate binding and the long-chain fatty acid omega-monooxygenase activity. As to expression, expressed mainly in human liver, followed by kidney, heart, and skeletal muscle.

It localises to the endoplasmic reticulum membrane. It is found in the microsome membrane. The enzyme catalyses an organic molecule + reduced [NADPH--hemoprotein reductase] + O2 = an alcohol + oxidized [NADPH--hemoprotein reductase] + H2O + H(+). The catalysed reaction is an omega-methyl-long-chain fatty acid + reduced [NADPH--hemoprotein reductase] + O2 = an omega-hydroxy-long-chain fatty acid + oxidized [NADPH--hemoprotein reductase] + H2O + H(+). It catalyses the reaction dodecanoate + reduced [NADPH--hemoprotein reductase] + O2 = 12-hydroxydodecanoate + oxidized [NADPH--hemoprotein reductase] + H2O + H(+). It carries out the reaction hexadecanoate + reduced [NADPH--hemoprotein reductase] + O2 = 16-hydroxyhexadecanoate + oxidized [NADPH--hemoprotein reductase] + H2O + H(+). The enzyme catalyses (9Z)-octadecenoate + reduced [NADPH--hemoprotein reductase] + O2 = 18-hydroxy-(9Z)-octadecenoate + oxidized [NADPH--hemoprotein reductase] + H2O + H(+). The catalysed reaction is (5Z,8Z,11Z,14Z)-eicosatetraenoate + reduced [NADPH--hemoprotein reductase] + O2 = 20-hydroxy-(5Z,8Z,11Z,14Z)-eicosatetraenoate + oxidized [NADPH--hemoprotein reductase] + H2O + H(+). It catalyses the reaction (4Z,7Z,10Z,13Z,16Z,19Z)-docosahexaenoate + reduced [NADPH--hemoprotein reductase] + O2 = 22-hydroxy-(4Z,7Z,10Z,13Z,16Z,19Z)-docosahexaenoate + oxidized [NADPH--hemoprotein reductase] + H2O + H(+). It carries out the reaction 8-hydroxy-(5Z,9E,11Z,14Z)-eicosatetraenoate + reduced [NADPH--hemoprotein reductase] + O2 = 8,20-dihydroxy-(5Z,9E,11Z,14Z)-eicosatetraenoate + oxidized [NADPH--hemoprotein reductase] + H2O + H(+). The enzyme catalyses 3-hydroxyhexadecanoate + reduced [NADPH--hemoprotein reductase] + O2 = 3,16-dihydroxyhexadecanoate + oxidized [NADPH--hemoprotein reductase] + H2O + H(+). The catalysed reaction is 3-hydroxyoctadecanoate + reduced [NADPH--hemoprotein reductase] + O2 = 3,18-dihydroxyoctadecanoate + oxidized [NADPH--hemoprotein reductase] + H2O + H(+). It catalyses the reaction phylloquinone + reduced [NADPH--hemoprotein reductase] + O2 = omega-hydroxyphylloquinone + oxidized [NADPH--hemoprotein reductase] + H2O + H(+). It carries out the reaction menaquinone-4 + reduced [NADPH--hemoprotein reductase] + O2 = omega-hydroxymenaquinone-4 + oxidized [NADPH--hemoprotein reductase] + H2O + H(+). The enzyme catalyses 2-hexyl-5-pentylresorcinol + reduced [NADPH--hemoprotein reductase] + O2 = 2-hexyl-5-(5-hydroxypentyl)resorcinol + oxidized [NADPH--hemoprotein reductase] + H2O + H(+). The catalysed reaction is 2-hexyl-5-heptylresorcinol + reduced [NADPH--hemoprotein reductase] + O2 = 2-hexyl-5-(7-hydroxyheptyl)resorcinol + oxidized [NADPH--hemoprotein reductase] + H2O + H(+). It catalyses the reaction 12-hydroxy-(5Z,8Z,10E,14Z)-eicosatetraenoate + reduced [NADPH--hemoprotein reductase] + O2 = 12,20-dihydroxy-(5Z,8Z,10E,14Z)-eicosatetraenoate + oxidized [NADPH--hemoprotein reductase] + H2O + H(+). It carries out the reaction 15-hydroxy-(5Z,8Z,11Z,13E)-eicosatetraenoate + reduced [NADPH--hemoprotein reductase] + O2 = 15,20-dihydroxy-(5Z,8Z,11Z,13E)-eicosatetraenoate + oxidized [NADPH--hemoprotein reductase] + H2O + H(+). It functions in the pathway lipid metabolism; arachidonate metabolism. It participates in lipid metabolism; oxylipin biosynthesis. The protein operates within cofactor degradation; phylloquinone degradation. Its pathway is xenobiotic degradation. Inhibition of the long-chain fatty acid omega-monooxygenase activity by 4-hydroxynonenal (4-HNE) conjugation. In terms of biological role, a cytochrome P450 monooxygenase involved in the metabolism of various endogenous substrates, including fatty acids and their oxygenated derivatives (oxylipins). Mechanistically, uses molecular oxygen inserting one oxygen atom into a substrate, and reducing the second into a water molecule, with two electrons provided by NADPH via cytochrome P450 reductase (CPR; NADPH-ferrihemoprotein reductase). Catalyzes with high efficiency the oxidation of the terminal carbon (omega-oxidation) of 3-hydroxy fatty acids, such as 3-hydroxyhexadecanoic and 3-hydroxyoctadecanoic acids, likely participating in the biosynthesis of long-chain 3-hydroxydicarboxylic acids. Omega-hydroxylates and inactivates phylloquinone (vitamin K1), and menaquinone-4 (MK-4, a form of vitamin K2), both acting as cofactors in blood coagulation. Metabolizes with low efficiciency fatty acids, including (5Z,8Z,11Z,14Z)-eicosatetraenoic acid (arachidonate) and its oxygenated metabolite 8-hydroxyeicosatetraenoic acid (8-HETE). Catalyzes N- and O-demethylation of drugs such as erythromycin, benzphetamine, ethylmorphine, chlorpromazine, imipramine and verapamil. Catalyzes the oxidation of dialkylresorcinol 2. The sequence is that of Cytochrome P450 4F11 from Homo sapiens (Human).